The primary structure comprises 862 residues: Valine--tRNA ligase (862 aa).

Positions 43–53 (PTVSGALHVGH) match the 'HIGH' region motif. Residues 459–494 (ERPILPDDAALPVDPSSDTPTGYHDSQRHQPGGFMA) are disordered. Positions 574–578 (KMSKS) match the 'KMSKS' region motif. Lysine 577 serves as a coordination point for ATP.

This sequence belongs to the class-I aminoacyl-tRNA synthetase family. ValS type 2 subfamily. As to quaternary structure, monomer.

It is found in the cytoplasm. The enzyme catalyses tRNA(Val) + L-valine + ATP = L-valyl-tRNA(Val) + AMP + diphosphate. Functionally, catalyzes the attachment of valine to tRNA(Val). As ValRS can inadvertently accommodate and process structurally similar amino acids such as threonine, to avoid such errors, it has a 'posttransfer' editing activity that hydrolyzes mischarged Thr-tRNA(Val) in a tRNA-dependent manner. The chain is Valine--tRNA ligase from Salinispora arenicola (strain CNS-205).